We begin with the raw amino-acid sequence, 1314 residues long: Phosphoribosylformylglycinamidine synthase (1314 aa).

Residues 307–318 (GAATGAGGEIRD) and Ala674 contribute to the ATP site. Mg(2+)-binding residues include Asp675, Glu714, Asn718, and Asp880. An ATP-binding site is contributed by Ser882. A Glutamine amidotransferase type-1 domain is found at 1063-1314 (IAILREQGVN…LFAGARKALG (252 aa)). Cys1156 functions as the Nucleophile in the catalytic mechanism. Catalysis depends on residues His1279 and Glu1281.

It in the N-terminal section; belongs to the FGAMS family. As to quaternary structure, monomer.

The protein localises to the cytoplasm. It carries out the reaction N(2)-formyl-N(1)-(5-phospho-beta-D-ribosyl)glycinamide + L-glutamine + ATP + H2O = 2-formamido-N(1)-(5-O-phospho-beta-D-ribosyl)acetamidine + L-glutamate + ADP + phosphate + H(+). It participates in purine metabolism; IMP biosynthesis via de novo pathway; 5-amino-1-(5-phospho-D-ribosyl)imidazole from N(2)-formyl-N(1)-(5-phospho-D-ribosyl)glycinamide: step 1/2. Its function is as follows. Phosphoribosylformylglycinamidine synthase involved in the purines biosynthetic pathway. Catalyzes the ATP-dependent conversion of formylglycinamide ribonucleotide (FGAR) and glutamine to yield formylglycinamidine ribonucleotide (FGAM) and glutamate. The polypeptide is Phosphoribosylformylglycinamidine synthase (Neisseria gonorrhoeae (strain ATCC 700825 / FA 1090)).